The primary structure comprises 435 residues: Nicotinate phosphoribosyltransferase (435 aa).

His-230 bears the Phosphohistidine; by autocatalysis mark.

It belongs to the NAPRTase family. Transiently phosphorylated on a His residue during the reaction cycle. Phosphorylation strongly increases the affinity for substrates and increases the rate of nicotinate D-ribonucleotide production. Dephosphorylation regenerates the low-affinity form of the enzyme, leading to product release.

It catalyses the reaction nicotinate + 5-phospho-alpha-D-ribose 1-diphosphate + ATP + H2O = nicotinate beta-D-ribonucleotide + ADP + phosphate + diphosphate. Its pathway is cofactor biosynthesis; NAD(+) biosynthesis; nicotinate D-ribonucleotide from nicotinate: step 1/1. Its function is as follows. Catalyzes the synthesis of beta-nicotinate D-ribonucleotide from nicotinate and 5-phospho-D-ribose 1-phosphate at the expense of ATP. This chain is Nicotinate phosphoribosyltransferase, found in Vibrio cholerae serotype O1 (strain ATCC 39541 / Classical Ogawa 395 / O395).